Consider the following 350-residue polypeptide: tRNA uridine(34) hydroxylase (350 aa).

In terms of domain architecture, Rhodanese spans 146 to 240 (DDPDALFIDM…YARKAREQGL (95 aa)). Cysteine 200 (cysteine persulfide intermediate) is an active-site residue.

The protein belongs to the TrhO family.

It carries out the reaction uridine(34) in tRNA + AH2 + O2 = 5-hydroxyuridine(34) in tRNA + A + H2O. Functionally, catalyzes oxygen-dependent 5-hydroxyuridine (ho5U) modification at position 34 in tRNAs. The sequence is that of tRNA uridine(34) hydroxylase from Shigella flexneri serotype 5b (strain 8401).